Reading from the N-terminus, the 407-residue chain is Peptidase T (407 aa).

H78 serves as a coordination point for Zn(2+). The active site involves D80. D141 provides a ligand contact to Zn(2+). E175 acts as the Proton acceptor in catalysis. Zn(2+) contacts are provided by E176, D198, and H380.

It belongs to the peptidase M20B family. Zn(2+) is required as a cofactor.

The protein resides in the cytoplasm. The catalysed reaction is Release of the N-terminal residue from a tripeptide.. Its function is as follows. Cleaves the N-terminal amino acid of tripeptides. The polypeptide is Peptidase T (Clostridium novyi (strain NT)).